Reading from the N-terminus, the 417-residue chain is Citrate synthase-related protein DDB_G0287281 (417 aa).

The tract at residues 284-317 (NKNNNNNNNNNNNNNNNNNNNNNNNNSEDDDDDN) is disordered. The span at 286-309 (NNNNNNNNNNNNNNNNNNNNNNNN) shows a compositional bias: low complexity.

Belongs to the citrate synthase family.

The polypeptide is Citrate synthase-related protein DDB_G0287281 (Dictyostelium discoideum (Social amoeba)).